Reading from the N-terminus, the 1614-residue chain is Adenylate cyclase type 10 (1614 aa).

Guanylate cyclase domains are found at residues 42–179 (VLMF…RLAQ) and 293–418 (TIVF…ARMM). Mg(2+) is bound by residues aspartate 47 and isoleucine 48. Residue 47–52 (DISGFT) participates in ATP binding. A hydrogencarbonate-binding site is contributed by lysine 95. Residue aspartate 99 coordinates Mg(2+). ATP-binding residues include aspartate 99 and lysine 144. Positions 167, 176, and 337 each coordinate hydrogencarbonate. Residues valine 406 and 412 to 416 (NIAAR) each bind ATP.

The protein belongs to the adenylyl cyclase class-4/guanylyl cyclase family. It depends on Mg(2+) as a cofactor. The cofactor is Mn(2+). In terms of tissue distribution, expressed in testis.

Its subcellular location is the cell membrane. It localises to the cytoplasm. It is found in the cytoskeleton. The protein resides in the perinuclear region. The protein localises to the nucleus. Its subcellular location is the cell projection. It localises to the cilium. It is found in the mitochondrion. The catalysed reaction is ATP = 3',5'-cyclic AMP + diphosphate. With respect to regulation, activated by manganese or magnesium ions. In the presence of magnesium ions, the enzyme is activated by bicarbonate. Calcium mildly increases the enzyme activity, also in the presence of magnesium ions. In terms of biological role, catalyzes the formation of the signaling molecule cAMP. May function as sensor that mediates responses to changes in cellular bicarbonate and CO(2) levels. Has a critical role in mammalian spermatogenesis by producing the cAMP which regulates cAMP-responsive nuclear factors indispensable for sperm maturation in the epididymis. Induces capacitation, the maturational process that sperm undergo prior to fertilization. Involved in ciliary beat regulation. The chain is Adenylate cyclase type 10 (Adcy10) from Mus musculus (Mouse).